Here is a 280-residue protein sequence, read N- to C-terminus: Uroporphyrinogen-III C-methyltransferase (280 aa).

Residues Pro-24, 100-102 (GGD), 130-131 (TA), Met-184, Ala-213, and Ala-241 each bind S-adenosyl-L-homocysteine.

This sequence belongs to the precorrin methyltransferase family. Homodimer.

It catalyses the reaction uroporphyrinogen III + 2 S-adenosyl-L-methionine = precorrin-2 + 2 S-adenosyl-L-homocysteine + H(+). The enzyme catalyses uroporphyrinogen III + S-adenosyl-L-methionine = precorrin-1 + S-adenosyl-L-homocysteine + H(+). The catalysed reaction is precorrin-1 + S-adenosyl-L-methionine = precorrin-2 + S-adenosyl-L-homocysteine. The protein operates within cofactor biosynthesis; adenosylcobalamin biosynthesis; precorrin-2 from uroporphyrinogen III: step 1/1. It functions in the pathway porphyrin-containing compound metabolism; siroheme biosynthesis; precorrin-2 from uroporphyrinogen III: step 1/1. S-adenosylhomocysteine is an extremely powerful competitive inhibitor of the uroporphyrinogen III methylation. SUMT exhibits a substrate inhibition phenomenon at uroporphyrinogen III concentrations above 2 uM; this property might play a regulatory role in cobalamin biosynthesis. The enzyme activity is completely insensitive to feedback inhibition by cobalamin and corrinoid intermediates. Catalyzes the two successive C-2 and C-7 methylation reactions involved in the conversion of uroporphyrinogen III to precorrin-2 via the intermediate formation of precorrin-1. It is a step in the biosynthesis of both cobalamin (vitamin B12) and siroheme. Neither uroporphyrin III nor the chlorin (factor I) is a substrate of SUMT. This is Uroporphyrinogen-III C-methyltransferase from Sinorhizobium sp.